Consider the following 305-residue polypeptide: Methionyl-tRNA formyltransferase (305 aa).

109-112 (SLLP) contributes to the (6S)-5,6,7,8-tetrahydrofolate binding site.

This sequence belongs to the Fmt family.

It catalyses the reaction L-methionyl-tRNA(fMet) + (6R)-10-formyltetrahydrofolate = N-formyl-L-methionyl-tRNA(fMet) + (6S)-5,6,7,8-tetrahydrofolate + H(+). Functionally, attaches a formyl group to the free amino group of methionyl-tRNA(fMet). The formyl group appears to play a dual role in the initiator identity of N-formylmethionyl-tRNA by promoting its recognition by IF2 and preventing the misappropriation of this tRNA by the elongation apparatus. This is Methionyl-tRNA formyltransferase from Paramagnetospirillum magneticum (strain ATCC 700264 / AMB-1) (Magnetospirillum magneticum).